The primary structure comprises 38 residues: Tyrosinase inhibitor (38 aa).

Cystine bridges form between Cys-11-Cys-25, Cys-18-Cys-29, and Cys-24-Cys-36. Residue Tyr-32 is modified to 3',4'-dihydroxyphenylalanine.

In terms of assembly, monomer. Contains L-DOPA (3',4'-dihydroxyphenylalanine).

The protein resides in the secreted. Its function is as follows. Potent reversible, competitive inhibitor of tyrosinase (phenol oxidase) in the nanomolar range. This is Tyrosinase inhibitor from Musca domestica (House fly).